We begin with the raw amino-acid sequence, 427 residues long: Dihydrofolate synthetase (427 aa).

34-37 (GKGS) contributes to the ATP binding site. Positions 123 and 153 each coordinate Mg(2+). ATP-binding residues include R275 and D296.

This sequence belongs to the folylpolyglutamate synthase family.

It is found in the cytoplasm. It carries out the reaction 7,8-dihydropteroate + L-glutamate + ATP = 7,8-dihydrofolate + ADP + phosphate + H(+). Its pathway is cofactor biosynthesis; tetrahydrofolylpolyglutamate biosynthesis. Its function is as follows. Glutamate-adding enzyme which catalyzes the binding of the first glutamyl side chain to dihydropteroate. Leads to the de nove synthesis of tetrahydrofolate. This is Dihydrofolate synthetase (FOL3) from Saccharomyces cerevisiae (strain ATCC 204508 / S288c) (Baker's yeast).